Consider the following 478-residue polypeptide: Protein nucleotidyltransferase YdiU (478 aa).

ATP-binding residues include Gly-84, Gly-86, Arg-87, Lys-107, Asp-119, Gly-120, Arg-170, and Arg-177. The active-site Proton acceptor is the Asp-246. The Mg(2+) site is built by Asn-247 and Asp-256. An ATP-binding site is contributed by Asp-256.

This sequence belongs to the SELO family. The cofactor is Mg(2+). Mn(2+) is required as a cofactor.

The enzyme catalyses L-seryl-[protein] + ATP = 3-O-(5'-adenylyl)-L-seryl-[protein] + diphosphate. It carries out the reaction L-threonyl-[protein] + ATP = 3-O-(5'-adenylyl)-L-threonyl-[protein] + diphosphate. It catalyses the reaction L-tyrosyl-[protein] + ATP = O-(5'-adenylyl)-L-tyrosyl-[protein] + diphosphate. The catalysed reaction is L-histidyl-[protein] + UTP = N(tele)-(5'-uridylyl)-L-histidyl-[protein] + diphosphate. The enzyme catalyses L-seryl-[protein] + UTP = O-(5'-uridylyl)-L-seryl-[protein] + diphosphate. It carries out the reaction L-tyrosyl-[protein] + UTP = O-(5'-uridylyl)-L-tyrosyl-[protein] + diphosphate. Its function is as follows. Nucleotidyltransferase involved in the post-translational modification of proteins. It can catalyze the addition of adenosine monophosphate (AMP) or uridine monophosphate (UMP) to a protein, resulting in modifications known as AMPylation and UMPylation. The protein is Protein nucleotidyltransferase YdiU of Shigella boydii serotype 18 (strain CDC 3083-94 / BS512).